Here is a 302-residue protein sequence, read N- to C-terminus: MTNKLKKDHAFWAAVCLLLSIVPELLNALPEEDDDTINTDSELRPMKPLHTFCAMKAEDGPCKAMIRSYYFNMNSHQCEEFIYGGCRGNKNRFDTLEECRKTCIPGYKKTTIKTTSGAEKPDFCFLEEDPGICRGFMTRYFYNNQSKQCEQFKYGGCLGNSNNFETLEECRNTCEDPVNEVQKGDYVTNQITVTDRTTVNNVVIPQATKAPSQWDYDGPSWCLEPADSGLCKASEKRFYYNPAIGKCRQFNYTGCGGNNNNFTTKQDCNRACKKDSSKKSSKRAKTQRRRKSFVKVMYENIH.

An N-terminal signal peptide occupies residues 1-28; the sequence is MTNKLKKDHAFWAAVCLLLSIVPELLNA. BPTI/Kunitz inhibitor domains lie at 53 to 103, 124 to 174, and 222 to 272; these read CAMK…RKTC, CFLE…RNTC, and CLEP…NRAC. Intrachain disulfides connect cysteine 53–cysteine 103, cysteine 62–cysteine 86, cysteine 78–cysteine 99, cysteine 124–cysteine 174, cysteine 133–cysteine 157, cysteine 149–cysteine 170, cysteine 222–cysteine 272, cysteine 231–cysteine 255, and cysteine 247–cysteine 268. Residue asparagine 144 is glycosylated (N-linked (GlcNAc...) asparagine). N-linked (GlcNAc...) asparagine glycans are attached at residues asparagine 251 and asparagine 261.

In terms of tissue distribution, most abundant in heart, lung, kidney, and aortic endothelial cells.

It localises to the secreted. Its function is as follows. Inhibits factor X (X(a)) directly and, in a Xa-dependent way, inhibits VIIa/tissue factor activity, presumably by forming a quaternary Xa/LACI/VIIa/TF complex. It possesses an antithrombotic action and also the ability to associate with lipoproteins in plasma. The polypeptide is Tissue factor pathway inhibitor (Tfpi) (Rattus norvegicus (Rat)).